The following is a 125-amino-acid chain: Histone H2A (125 aa).

The span at 1 to 18 (MSGRGKGGKVKGKSKTRS) shows a compositional bias: basic residues. Positions 1–23 (MSGRGKGGKVKGKSKTRSSRAGL) are disordered. An N-acetylserine modification is found at Ser2. Gln104 carries the post-translational modification N5-methylglutamine.

The protein belongs to the histone H2A family. In terms of assembly, the nucleosome is a histone octamer containing two molecules each of H2A, H2B, H3 and H4 assembled in one H3-H4 heterotetramer and two H2A-H2B heterodimers. The octamer wraps approximately 147 bp of DNA.

The protein localises to the nucleus. It localises to the chromosome. In terms of biological role, core component of nucleosome. Nucleosomes wrap and compact DNA into chromatin, limiting DNA accessibility to the cellular machineries which require DNA as a template. Histones thereby play a central role in transcription regulation, DNA repair, DNA replication and chromosomal stability. DNA accessibility is regulated via a complex set of post-translational modifications of histones, also called histone code, and nucleosome remodeling. This Sepia officinalis (Common cuttlefish) protein is Histone H2A.